The following is a 350-amino-acid chain: Phosphotriesterase-related protein (350 aa).

The a divalent metal cation site is built by H22, H24, E169, H201, H230, and D298.

This sequence belongs to the metallo-dependent hydrolases superfamily. Phosphotriesterase family. The cofactor is a divalent metal cation.

The sequence is that of Phosphotriesterase-related protein from Drosophila mojavensis (Fruit fly).